We begin with the raw amino-acid sequence, 170 residues long: Shikimate kinase (170 aa).

Residue Leu11 to Thr16 coordinates ATP. Mg(2+) is bound at residue Ser15. 3 residues coordinate substrate: Asp33, Arg57, and Gly79. Arg119 lines the ATP pocket. Arg137 serves as a coordination point for substrate.

It belongs to the shikimate kinase family. Monomer. It depends on Mg(2+) as a cofactor.

It is found in the cytoplasm. It catalyses the reaction shikimate + ATP = 3-phosphoshikimate + ADP + H(+). The protein operates within metabolic intermediate biosynthesis; chorismate biosynthesis; chorismate from D-erythrose 4-phosphate and phosphoenolpyruvate: step 5/7. Its function is as follows. Catalyzes the specific phosphorylation of the 3-hydroxyl group of shikimic acid using ATP as a cosubstrate. The polypeptide is Shikimate kinase (Clostridium botulinum (strain Okra / Type B1)).